A 554-amino-acid polypeptide reads, in one-letter code: Phenylalanine--tRNA ligase beta subunit (554 aa).

One can recognise a B5 domain in the interval 276-351; sequence LTPRYREISI…KNHGYEKFEG (76 aa). Residues Asp-329, Asp-335, Glu-338, and Glu-339 each contribute to the Mg(2+) site.

This sequence belongs to the phenylalanyl-tRNA synthetase beta subunit family. Type 2 subfamily. As to quaternary structure, tetramer of two alpha and two beta subunits. Mg(2+) is required as a cofactor.

The protein resides in the cytoplasm. The enzyme catalyses tRNA(Phe) + L-phenylalanine + ATP = L-phenylalanyl-tRNA(Phe) + AMP + diphosphate + H(+). This chain is Phenylalanine--tRNA ligase beta subunit, found in Methanococcus vannielii (strain ATCC 35089 / DSM 1224 / JCM 13029 / OCM 148 / SB).